The primary structure comprises 142 residues: HTH-type transcriptional regulator MntR (142 aa).

The region spanning Met-1–Thr-63 is the HTH dtxR-type domain. Residues Asp-8, Glu-11, His-77, Glu-99, Glu-102, and His-103 each contribute to the Cd(2+) site. Residues Asp-8, Glu-11, His-77, Glu-99, Glu-102, and His-103 each coordinate Mn(2+).

It belongs to the DtxR/MntR family. Homodimer.

The protein localises to the cytoplasm. With respect to regulation, DNA binding is strongly activated by Mn(2+) and Cd(2+), but it is poorly activated by non-cognate metal cations, including Co(2+), Fe(2+), Ni(2+), Ca(2+) and Zn(2+). In the strict absence of divalent transition metal ions, MntR has a low affinity for DNA. In terms of biological role, central regulator of manganese homeostasis that regulates the expression of both manganese uptake and efflux systems. In the presence of high levels of manganese, it mediates repression of the manganese uptake systems MntH and MntABCD and activation of the efflux systems MneP and MneS. Binds with high affinity to the regulatory regions of its target genes. The manganese concentration required for activation of efflux is higher than that for repression of uptake. This chain is HTH-type transcriptional regulator MntR, found in Bacillus subtilis (strain 168).